Here is a 348-residue protein sequence, read N- to C-terminus: Serpentine receptor class alpha-29 (348 aa).

Helical transmembrane passes span 28 to 48, 108 to 130, 145 to 165, 193 to 213, 246 to 266, and 280 to 300; these read FILMIIVVSFITTALAVQTLW, FLYYQTALFSSFYCVSLFLDRLF, GFIVFLILQIICPIAIQFWTF, INDSRIIIMGTIFMCSLFLYI, CIIIFSQITCLGITSFVPSIF, and LILAFMAGATYSNFFLPLIVI.

The protein belongs to the nematode receptor-like protein sra family.

The protein resides in the membrane. The polypeptide is Serpentine receptor class alpha-29 (sra-29) (Caenorhabditis elegans).